The chain runs to 179 residues: Archaemetzincin (179 aa).

His128 contributes to the Zn(2+) binding site. Residue Glu129 is the Proton acceptor of the active site. Zn(2+) contacts are provided by His132, His138, Cys139, Cys144, Cys163, and Cys166.

It belongs to the peptidase M54 family. As to quaternary structure, monomer. Requires Zn(2+) as cofactor.

Its function is as follows. Probable zinc metalloprotease whose natural substrate is unknown. The chain is Archaemetzincin from Methanocaldococcus jannaschii (strain ATCC 43067 / DSM 2661 / JAL-1 / JCM 10045 / NBRC 100440) (Methanococcus jannaschii).